Here is a 574-residue protein sequence, read N- to C-terminus: 4-oxocyclohexanecarboxylate 2-dehydrogenase (574 aa).

This sequence belongs to the FAD-dependent oxidoreductase 2 family. Monomer. Homodimer. FAD serves as cofactor.

The catalysed reaction is 4-oxocyclohexane-1-carboxylate + O2 = 4-oxocyclohex-2-ene-1-carboxylate + H2O2. With respect to regulation, inhibited by 5,5'-dithio-bis(2- nitrobenzoate) and N-bromosuccinimide, but not by thiol and chelating reagents. In terms of biological role, desaturase involved in a cyclohexanecarboxylate (CHCA) degradation pathway. Catalyzes the conversion of 4-oxocyclohexanecarboxylate (4-oxoCHCA) to 4-oxocyclohexenecarboxylate. Is highly specific for 4-oxocyclohexanecarboxylic acid and shows only slight activity with 4-oxo-2-methylcyclohex-2-enecarboxylic acid. The protein is 4-oxocyclohexanecarboxylate 2-dehydrogenase of Sinomonas cyclohexanicum (Corynebacterium cyclohexanicum).